We begin with the raw amino-acid sequence, 94 residues long: Co-chaperonin GroES (94 aa).

Positions 17 to 53 (DSNPNSPIQLPDSAKKKPTKGKVVSVGPGASNSDGKV) are disordered.

The protein belongs to the GroES chaperonin family. In terms of assembly, heptamer of 7 subunits arranged in a ring. Interacts with the chaperonin GroEL.

The protein localises to the cytoplasm. Together with the chaperonin GroEL, plays an essential role in assisting protein folding. The GroEL-GroES system forms a nano-cage that allows encapsulation of the non-native substrate proteins and provides a physical environment optimized to promote and accelerate protein folding. GroES binds to the apical surface of the GroEL ring, thereby capping the opening of the GroEL channel. The chain is Co-chaperonin GroES from Anaplasma phagocytophilum (strain HZ).